A 437-amino-acid chain; its full sequence is tRNA-2-methylthio-N(6)-dimethylallyladenosine synthase (437 aa).

In terms of domain architecture, MTTase N-terminal spans 1–115 (MKVYIETMGC…ISQVIHKEKA (115 aa)). Residues Cys10, Cys46, Cys78, Cys148, Cys152, and Cys155 each contribute to the [4Fe-4S] cluster site. The region spanning 134–367 (KKAQIRSLLN…QNRHKEILEE (234 aa)) is the Radical SAM core domain. One can recognise a TRAM domain in the interval 370–436 (KLEVGKTHVV…KGRLMATTKG (67 aa)).

It belongs to the methylthiotransferase family. MiaB subfamily. As to quaternary structure, monomer. It depends on [4Fe-4S] cluster as a cofactor.

It localises to the cytoplasm. It carries out the reaction N(6)-dimethylallyladenosine(37) in tRNA + (sulfur carrier)-SH + AH2 + 2 S-adenosyl-L-methionine = 2-methylsulfanyl-N(6)-dimethylallyladenosine(37) in tRNA + (sulfur carrier)-H + 5'-deoxyadenosine + L-methionine + A + S-adenosyl-L-homocysteine + 2 H(+). Functionally, catalyzes the methylthiolation of N6-(dimethylallyl)adenosine (i(6)A), leading to the formation of 2-methylthio-N6-(dimethylallyl)adenosine (ms(2)i(6)A) at position 37 in tRNAs that read codons beginning with uridine. This Helicobacter pylori (strain G27) protein is tRNA-2-methylthio-N(6)-dimethylallyladenosine synthase.